We begin with the raw amino-acid sequence, 153 residues long: Transcriptional repressor NrdR (153 aa).

A zinc finger lies at 3–34; sequence CPSCSHNGTRVLDSRPVDEGRSIRRRRECESC. The 91-residue stretch at 49 to 139 folds into the ATP-cone domain; sequence LIVVKKEGTR…VYRQFKDLNV (91 aa).

The protein belongs to the NrdR family. Zn(2+) serves as cofactor.

Its function is as follows. Negatively regulates transcription of bacterial ribonucleotide reductase nrd genes and operons by binding to NrdR-boxes. The chain is Transcriptional repressor NrdR from Bacillus anthracis (strain A0248).